The following is a 344-amino-acid chain: L-rhamnose-proton symporter (344 aa).

Helical transmembrane passes span 4–24 (AITM…CFYA), 38–58 (WSVG…ALLL), 68–88 (FNLS…IGNI), 101–121 (MGIG…TPII), 137–157 (TLLG…AGQL), 175–195 (LLLA…MNAA), 214–234 (LPSY…FCFI), 259–279 (ILLS…YAWG), 290–310 (MSWM…GLVL), and 321–341 (VAVL…VGLG).

This sequence belongs to the L-rhamnose transporter (TC 2.A.7.6) family.

The protein localises to the cell inner membrane. The enzyme catalyses L-rhamnopyranose(in) + H(+)(in) = L-rhamnopyranose(out) + H(+)(out). Functionally, uptake of L-rhamnose across the cytoplasmic membrane with the concomitant transport of protons into the cell (symport system). The sequence is that of L-rhamnose-proton symporter from Salmonella agona (strain SL483).